The following is a 224-amino-acid chain: MSGKTVIVLLSGGLDSMVCAGLAREAGARIVALTIDYNQRHRVELESAARIAAHVGAAEHIVLPLDLRRFGGSALTADIDVPKDGVGTDIPVTYVPARNLIFLSLTLGLAEARQAADIVIGVNALDYSGYPDCRPAFIQGFEKLAALATRDGDQGVRFHIHAPLQHMTKADIAAEAARLGMDAAMSWSCYDPTPEGLHCGACDSCRLRRKGFADAGLADPTRYA.

10–20 provides a ligand contact to ATP; the sequence is LSGGLDSMVCA. 4 residues coordinate Zn(2+): Cys-189, Cys-199, Cys-202, and Cys-205.

It belongs to the QueC family. Zn(2+) is required as a cofactor.

It carries out the reaction 7-carboxy-7-deazaguanine + NH4(+) + ATP = 7-cyano-7-deazaguanine + ADP + phosphate + H2O + H(+). It functions in the pathway purine metabolism; 7-cyano-7-deazaguanine biosynthesis. Functionally, catalyzes the ATP-dependent conversion of 7-carboxy-7-deazaguanine (CDG) to 7-cyano-7-deazaguanine (preQ(0)). The chain is 7-cyano-7-deazaguanine synthase 1 from Sphingopyxis alaskensis (strain DSM 13593 / LMG 18877 / RB2256) (Sphingomonas alaskensis).